We begin with the raw amino-acid sequence, 309 residues long: UDP-N-acetylenolpyruvoylglucosamine reductase (309 aa).

In terms of domain architecture, FAD-binding PCMH-type spans 25-188 (RVGGPADWLF…TSVTLQGNRE (164 aa)). The active site involves Arg-168. The disordered stretch occupies residues 202 to 231 (AKRDATQPTKALTAGSTFRNPAGFSSTGQA). A compositionally biased stretch (polar residues) spans 207-231 (TQPTKALTAGSTFRNPAGFSSTGQA). Ser-217 (proton donor) is an active-site residue. Glu-299 is a catalytic residue.

This sequence belongs to the MurB family. It depends on FAD as a cofactor.

It is found in the cytoplasm. It catalyses the reaction UDP-N-acetyl-alpha-D-muramate + NADP(+) = UDP-N-acetyl-3-O-(1-carboxyvinyl)-alpha-D-glucosamine + NADPH + H(+). The protein operates within cell wall biogenesis; peptidoglycan biosynthesis. Its function is as follows. Cell wall formation. The sequence is that of UDP-N-acetylenolpyruvoylglucosamine reductase from Jannaschia sp. (strain CCS1).